Here is a 125-residue protein sequence, read N- to C-terminus: Large ribosomal subunit protein bL12 (125 aa).

It belongs to the bacterial ribosomal protein bL12 family. As to quaternary structure, homodimer. Part of the ribosomal stalk of the 50S ribosomal subunit. Forms a multimeric L10(L12)X complex, where L10 forms an elongated spine to which 2 to 4 L12 dimers bind in a sequential fashion. Binds GTP-bound translation factors.

In terms of biological role, forms part of the ribosomal stalk which helps the ribosome interact with GTP-bound translation factors. Is thus essential for accurate translation. This Sinorhizobium medicae (strain WSM419) (Ensifer medicae) protein is Large ribosomal subunit protein bL12.